The primary structure comprises 149 residues: Large ribosomal subunit protein uL15 (149 aa).

A disordered region spans residues 1–53 (MRLHTLQPAPGAKSTRKRVGRGTSSGHGKTSGFGHKGQKARSGRVGKRGFEGG). Over residues 23–35 (TSSGHGKTSGFGH) the composition is skewed to gly residues. Basic residues predominate over residues 36–47 (KGQKARSGRVGK).

The protein belongs to the universal ribosomal protein uL15 family. In terms of assembly, part of the 50S ribosomal subunit.

Binds to the 23S rRNA. The sequence is that of Large ribosomal subunit protein uL15 from Coprothermobacter proteolyticus (strain ATCC 35245 / DSM 5265 / OCM 4 / BT).